A 527-amino-acid polypeptide reads, in one-letter code: Peptide chain release factor 3 (527 aa).

Residues 10 to 278 enclose the tr-type G domain; sequence DRRRTFAIIS…TFVENAPAPL (269 aa). GTP is bound by residues 19 to 26, 87 to 91, and 141 to 144; these read SHPDAGKT, DTPGH, and NKLD.

This sequence belongs to the TRAFAC class translation factor GTPase superfamily. Classic translation factor GTPase family. PrfC subfamily.

Its subcellular location is the cytoplasm. Increases the formation of ribosomal termination complexes and stimulates activities of RF-1 and RF-2. It binds guanine nucleotides and has strong preference for UGA stop codons. It may interact directly with the ribosome. The stimulation of RF-1 and RF-2 is significantly reduced by GTP and GDP, but not by GMP. The polypeptide is Peptide chain release factor 3 (Geobacter metallireducens (strain ATCC 53774 / DSM 7210 / GS-15)).